Consider the following 2542-residue polypeptide: Ankyrin repeat and KH domain-containing protein 1 (2542 aa).

At M1 the chain carries N-acetylmethionine. Over residues 1-10 the composition is skewed to gly residues; the sequence is MLTDSGGGGT. Disordered stretches follow at residues 1–44 and 50–69; these read MLTD…IRTV and AGPA…SGTG. Residues 20 to 29 are compositionally biased toward low complexity; sequence APRSAPAGAS. Over residues 57 to 69 the composition is skewed to gly residues; it reads GSSGGGGSGSGTG. Residues S101 and S105 each carry the phosphoserine modification. ANK repeat units follow at residues 204 to 233, 237 to 266, 271 to 300, 304 to 333, 337 to 366, 371 to 400, 404 to 433, 437 to 466, 470 to 499, 504 to 533, 534 to 563, 567 to 596, 600 to 629, 634 to 663, and 667 to 696; these read VDTR…SVNE, EGES…NVED, GDIT…DVNS, TGNT…NIED, NGHT…GINT, FKES…DQEH, EMHT…QVNM, SFES…NLEE, EGYT…NINA, TQET…DIEL, GCST…NVHA, TGDT…DLEH, GGRT…NVNR, NDHT…DPTH, and DGST…NVLS. Residues 775 to 852 adopt a coiled-coil conformation; the sequence is LECIVEETEG…RQLQMKTQQQ (78 aa). S803 bears the Phosphoserine mark. ANK repeat units lie at residues 1054 to 1083, 1087 to 1116, 1121 to 1150, 1154 to 1183, 1189 to 1218, 1223 to 1252, 1256 to 1285, 1291 to 1320, 1324 to 1353, and 1357 to 1386; these read NHDT…KIEH, KGFT…DIEA, TKDT…NKEH, SDYT…EINS, LGIS…DINA, NRNT…NVEH, TGLT…DVNA, SRDT…HIDV, KGNT…DVDA, and RKIT…QFPS. Residues 1415-1485 adopt a coiled-coil conformation; that stretch reads KAKDQQAAEA…ENKPKENSEL (71 aa). Disordered stretches follow at residues 1441–1517, 1534–1614, and 1632–1664; these read REES…TIGI, NVVT…SQEL, and SQEE…YKTV. Basic residues predominate over residues 1453–1463; sequence REKRKEKRKKK. The span at 1464 to 1483 shows a compositional bias: basic and acidic residues; the sequence is KEEQKRKQEEDEENKPKENS. Over residues 1484-1502 the composition is skewed to acidic residues; the sequence is ELPEDEDEEENDEDVEQEV. Residues 1503–1517 are compositionally biased toward low complexity; it reads PIEPPSATTTTTIGI. Position 1540 is a phosphoserine (S1540). T1553 is modified (phosphothreonine). The span at 1590–1603 shows a compositional bias: low complexity; sequence NSDSDNLDSTDCNS. A compositionally biased stretch (polar residues) spans 1604–1614; it reads ESSSGGKSQEL. A Phosphoserine modification is found at S1632. A compositionally biased stretch (polar residues) spans 1638–1664; the sequence is STATSKTQTRLEGEVTPNSLSTSYKTV. At T1653 the chain carries Phosphothreonine. Positions 1695–1759 constitute a KH domain; sequence RRSKKLSVPA…ESTRYAVQLI (65 aa). Disordered regions lie at residues 1886–1923, 1987–2106, and 2260–2367; these read NTWG…VLPS, PSVS…APLT, and NMHP…IPPP. Positions 1898 to 1922 are enriched in polar residues; it reads PGNTNSSPKHNNTSRLPNQNGTVLP. A compositionally biased stretch (low complexity) spans 1987-1996; that stretch reads PSVSSAPITS. Over residues 1997-2019 the composition is skewed to polar residues; that stretch reads GQAPTTFLPASTSQAQLSSQKME. A compositionally biased stretch (low complexity) spans 2042 to 2077; sequence CTPSSTANSCSSSASNTPGAPETHPSSSPTPTSSNT. Residues 2078 to 2106 are compositionally biased toward polar residues; it reads QEEAQPSSVSDLSPMSMPFASNSEPAPLT. Composition is skewed to low complexity over residues 2285–2308 and 2337–2349; these read LPSI…FSGI and TSAS…APPT.

This sequence belongs to the mask family. As to quaternary structure, interacts with PTPN11. Isoform 2 interacts with HIV-1 VPR. Interacts with NOD2. Ubiquitous with high expression in cervix, spleen and brain. Expressed in hematopoietic cells with increased expression in leukemia cells. Isoform 2 is highly expressed in spleen with almost no expression in muscle and brain.

Its subcellular location is the cytoplasm. Its function is as follows. May play a role as a scaffolding protein that may be associated with the abnormal phenotype of leukemia cells. Isoform 2 may possess an antiapoptotic effect and protect cells during normal cell survival through its regulation of caspases. The polypeptide is Ankyrin repeat and KH domain-containing protein 1 (ANKHD1) (Homo sapiens (Human)).